A 104-amino-acid polypeptide reads, in one-letter code: Large ribosomal subunit protein uL24 (104 aa).

It belongs to the universal ribosomal protein uL24 family. Part of the 50S ribosomal subunit.

In terms of biological role, one of two assembly initiator proteins, it binds directly to the 5'-end of the 23S rRNA, where it nucleates assembly of the 50S subunit. One of the proteins that surrounds the polypeptide exit tunnel on the outside of the subunit. This chain is Large ribosomal subunit protein uL24, found in Corynebacterium diphtheriae (strain ATCC 700971 / NCTC 13129 / Biotype gravis).